The primary structure comprises 324 residues: Anthranilate phosphoribosyltransferase (324 aa).

Residues Gly-75, 78 to 79 (GD), Thr-83, 85 to 88 (NVST), 102 to 110 (KHGNFGITG), and Ser-114 contribute to the 5-phospho-alpha-D-ribose 1-diphosphate site. Position 75 (Gly-75) interacts with anthranilate. Ser-87 serves as a coordination point for Mg(2+). Asn-105 serves as a coordination point for anthranilate. Arg-160 lines the anthranilate pocket. Positions 216 and 217 each coordinate Mg(2+).

It belongs to the anthranilate phosphoribosyltransferase family. In terms of assembly, homodimer. The cofactor is Mg(2+).

It carries out the reaction N-(5-phospho-beta-D-ribosyl)anthranilate + diphosphate = 5-phospho-alpha-D-ribose 1-diphosphate + anthranilate. The protein operates within amino-acid biosynthesis; L-tryptophan biosynthesis; L-tryptophan from chorismate: step 2/5. In terms of biological role, catalyzes the transfer of the phosphoribosyl group of 5-phosphorylribose-1-pyrophosphate (PRPP) to anthranilate to yield N-(5'-phosphoribosyl)-anthranilate (PRA). The chain is Anthranilate phosphoribosyltransferase from Picrophilus torridus (strain ATCC 700027 / DSM 9790 / JCM 10055 / NBRC 100828 / KAW 2/3).